A 115-amino-acid polypeptide reads, in one-letter code: Hydrogenase maturation factor HypA (115 aa).

Residue His-2 participates in Ni(2+) binding. Residues Cys-73, Cys-76, Cys-89, and Cys-92 each contribute to the Zn(2+) site.

The protein belongs to the HypA/HybF family.

Functionally, involved in the maturation of [NiFe] hydrogenases. Required for nickel insertion into the metal center of the hydrogenase. This chain is Hydrogenase maturation factor HypA, found in Aquifex aeolicus (strain VF5).